We begin with the raw amino-acid sequence, 189 residues long: UPF0301 protein RC0043 (189 aa).

It belongs to the UPF0301 (AlgH) family.

This chain is UPF0301 protein RC0043, found in Rickettsia conorii (strain ATCC VR-613 / Malish 7).